The primary structure comprises 275 residues: Ribosomal RNA small subunit methyltransferase A (275 aa).

N28, L30, G55, E77, D103, and N123 together coordinate S-adenosyl-L-methionine.

Belongs to the class I-like SAM-binding methyltransferase superfamily. rRNA adenine N(6)-methyltransferase family. RsmA subfamily.

The protein localises to the cytoplasm. It catalyses the reaction adenosine(1518)/adenosine(1519) in 16S rRNA + 4 S-adenosyl-L-methionine = N(6)-dimethyladenosine(1518)/N(6)-dimethyladenosine(1519) in 16S rRNA + 4 S-adenosyl-L-homocysteine + 4 H(+). In terms of biological role, specifically dimethylates two adjacent adenosines (A1518 and A1519) in the loop of a conserved hairpin near the 3'-end of 16S rRNA in the 30S particle. May play a critical role in biogenesis of 30S subunits. The protein is Ribosomal RNA small subunit methyltransferase A of Rhizobium etli (strain ATCC 51251 / DSM 11541 / JCM 21823 / NBRC 15573 / CFN 42).